The primary structure comprises 361 residues: DNA replication and repair protein RecF (361 aa).

An ATP-binding site is contributed by 30–37 (GANGSGKT).

This sequence belongs to the RecF family.

It is found in the cytoplasm. Its function is as follows. The RecF protein is involved in DNA metabolism; it is required for DNA replication and normal SOS inducibility. RecF binds preferentially to single-stranded, linear DNA. It also seems to bind ATP. This Chromohalobacter salexigens (strain ATCC BAA-138 / DSM 3043 / CIP 106854 / NCIMB 13768 / 1H11) protein is DNA replication and repair protein RecF.